The sequence spans 439 residues: Ribulose bisphosphate carboxylase/oxygenase activase, chloroplastic (439 aa).

Residue 167-174 (GGKGQGKS) participates in ATP binding.

Belongs to the RuBisCO activase family.

Its subcellular location is the plastid. It is found in the chloroplast stroma. Functionally, activation of RuBisCO (ribulose-1,5-bisphosphate carboxylase/oxygenase; EC 4.1.1.39) involves the ATP-dependent carboxylation of the epsilon-amino group of lysine leading to a carbamate structure. This Vigna radiata var. radiata (Mung bean) protein is Ribulose bisphosphate carboxylase/oxygenase activase, chloroplastic (RCA).